The sequence spans 575 residues: Cyclic nucleotide-gated channel alpha-4 (575 aa).

Residues 1–38 (MSQDGKVKTTESTPPAPTKARKWLPVLDPSGDYYYWWL) are Cytoplasmic-facing. A helical membrane pass occupies residues 39–60 (NTMVFPIMYNLIIVVCRACFPD). Residues 61–70 (LQHSYLVAWF) are Extracellular-facing. A helical membrane pass occupies residues 71-91 (VLDYTSDLLYLLDIGVRFHTG). The Cytoplasmic segment spans residues 92-116 (FLEQGILVVDKGMIASRYVRTWSFL). The helical transmembrane segment at 117-135 (LDLASLVPTDAAYVQLGPH) threads the bilayer. At 136–140 (IPTLR) the chain is on the extracellular side. The helical transmembrane segment at 141 to 159 (LNRFLRVPRLFEAFDRTET) threads the bilayer. The Cytoplasmic portion of the chain corresponds to 160-166 (RTAYPNA). The ion conduction pathway stretch occupies residues 164–272 (PNAFRIAKLM…GSMSSVIYNM (109 aa)). Residues 167–190 (FRIAKLMLYIFVVIHWNSCLYFAL) form a helical membrane-spanning segment. At 191-213 (SRYLGFGRDAWVYPDPAQPGFER) the chain is on the extracellular side. The next 2 membrane-spanning stretches (helical) occupy residues 214-248 (LRRQ…LFMV) and 249-273 (GDFL…YNMN). Residues 231–234 (TVGD) form a selectivity filter region. A C-linker region spans residues 274 to 350 (TADAAFYPDH…STLSRVQIFQ (77 aa)). At 274–575 (TADAAFYPDH…AGQAGPSGIE (302 aa)) the chain is on the cytoplasmic side. The IQ-type motif lies at 292–302 (LQHVNKRLERR). 348-471 (IFQNCEASLL…AVMEEKGREI (124 aa)) is an a nucleoside 3',5'-cyclic phosphate binding site. Residues 354–474 (ASLLEELVLK…EEKGREILLK (121 aa)) form a cyclic nucleotide-binding domain region. The 3',5'-cyclic GMP site is built by glycine 414, serine 417, arginine 430, and threonine 431. Residues arginine 430 and threonine 431 each coordinate 3',5'-cyclic AMP. Residues 493-547 (TESRLKGLDQQLDDLQTKFARLLAELESSALKIAYRIERLEWQTREWPMPEDMGE) are a coiled coil. Positions 537-575 (REWPMPEDMGEADDEAEPGEGTSKDGEGKAGQAGPSGIE) are disordered. The span at 544 to 554 (DMGEADDEAEP) shows a compositional bias: acidic residues.

Belongs to the cyclic nucleotide-gated cation channel (TC 1.A.1.5) family. CNGA4 subfamily. As to quaternary structure, the olfactory cyclic nucleotide-gated channel is an heterotetramer composed of CNGA2, CNGA4 and CNGB1b subunits with 2:1:1 stoichiometry. May form homomeric channels gated by nitric oxide. N-glycosylated. As to expression, olfactory neurons. Expressed in olfactory sensory cilia (at protein level).

It localises to the cell projection. The protein localises to the cilium membrane. It catalyses the reaction Ca(2+)(in) = Ca(2+)(out). The catalysed reaction is Na(+)(in) = Na(+)(out). It carries out the reaction K(+)(in) = K(+)(out). The enzyme catalyses NH4(+)(in) = NH4(+)(out). It catalyses the reaction Rb(+)(in) = Rb(+)(out). The catalysed reaction is Li(+)(in) = Li(+)(out). It carries out the reaction Cs(+)(in) = Cs(+)(out). With respect to regulation, ca(2+)-calmodulin exerts its inhibitory effect in cAMP sensitivity by binding to IQ-like motif of CNGA4 and preferably binds to the channel in the closed state. Inhibition by PIP3 of the CNG channel probably occurs via CGNA2 binding. Ca(2+) currents are inhibited by pimozide, an L-type Ca(2+) channel blocker. Its function is as follows. Pore-forming subunit of the olfactory cyclic nucleotide-gated channel. Operates in the cilia of olfactory sensory neurons where chemical stimulation of the odorant is converted to an electrical signal. Mediates odorant-induced cAMP-dependent Ca(2+) influx triggering neuron depolarization. The rise of intracellular Ca(2+) levels potentiates the olfactory response by activating Ca(2+)-dependent Cl(-) channels, but it also serves as a negative feedback signal to desensitize the channel for rapid adaptation to odorants. Conducts cAMP- and cGMP-gated ion currents, with permeability for monovalent and divalent cations. May conduct nitric oxide-gated Ca(2+) currents relevant to neurons of vomeronasal organ, a system involved in the perception of pheromones. This is Cyclic nucleotide-gated channel alpha-4 from Rattus norvegicus (Rat).